The primary structure comprises 338 residues: MKVSYDKDCDLSIIQGKKVAIIGYGSQGHAHACNLKDSGVDVTVGLRPGSSSIAKAEAHGLKVSDVPAAVAAADLVMILTPDEFQGRLYKDEVEPNLKQGATLAFAHGFSIHYNQVVPRADLDVIMIAPKAPGHTVRSEFVKGGGIPDLIAIYQDASGNARNVALSYACGVGGGRTGIIETTFKDETETDLFGEQAVLCGGCVELVKAGFETLVEAGYAPEMAYFECLHELKLIVDLMFEGGIANMNYSISNNAEYGEYVTGPEVINAESRAAMRNALKRIQDGEYAKMFITEGAANYPSMTAYRRNNAAHGIEVVGEKLRAMMPWIAANKIVDKSKN.

One can recognise a KARI N-terminal Rossmann domain in the interval 1-181; it reads MKVSYDKDCD…GGGRTGIIET (181 aa). Residues 24-27, Arg47, Ser50, Ser52, and 82-85 contribute to the NADP(+) site; these read YGSQ and DEFQ. Residue His107 is part of the active site. Residue Gly133 participates in NADP(+) binding. A KARI C-terminal knotted domain is found at 182-327; that stretch reads TFKDETETDL…EKLRAMMPWI (146 aa). The Mg(2+) site is built by Asp190, Glu194, Glu226, and Glu230. Residue Ser251 participates in substrate binding.

It belongs to the ketol-acid reductoisomerase family. The cofactor is Mg(2+).

The catalysed reaction is (2R)-2,3-dihydroxy-3-methylbutanoate + NADP(+) = (2S)-2-acetolactate + NADPH + H(+). It catalyses the reaction (2R,3R)-2,3-dihydroxy-3-methylpentanoate + NADP(+) = (S)-2-ethyl-2-hydroxy-3-oxobutanoate + NADPH + H(+). It participates in amino-acid biosynthesis; L-isoleucine biosynthesis; L-isoleucine from 2-oxobutanoate: step 2/4. The protein operates within amino-acid biosynthesis; L-valine biosynthesis; L-valine from pyruvate: step 2/4. Functionally, involved in the biosynthesis of branched-chain amino acids (BCAA). Catalyzes an alkyl-migration followed by a ketol-acid reduction of (S)-2-acetolactate (S2AL) to yield (R)-2,3-dihydroxy-isovalerate. In the isomerase reaction, S2AL is rearranged via a Mg-dependent methyl migration to produce 3-hydroxy-3-methyl-2-ketobutyrate (HMKB). In the reductase reaction, this 2-ketoacid undergoes a metal-dependent reduction by NADPH to yield (R)-2,3-dihydroxy-isovalerate. The protein is Ketol-acid reductoisomerase (NADP(+)) of Stutzerimonas stutzeri (strain A1501) (Pseudomonas stutzeri).